The chain runs to 425 residues: Kynurenine/alpha-aminoadipate aminotransferase, mitochondrial (425 aa).

The N-terminal 29 residues, 1 to 29, are a transit peptide targeting the mitochondrion; the sequence is MNYSRFLTATSLARKPSPIRTTADILSKA. Residue Arg-20 participates in substrate binding. At Ser-40 the chain carries Phosphoserine. At Lys-69 the chain carries N6-acetyllysine. Tyr-74 contacts substrate. Lys-172 is subject to N6-succinyllysine. The residue at position 179 (Lys-179) is an N6-acetyllysine. Asn-202 is a substrate binding site. Lys-263 bears the N6-(pyridoxal phosphate)lysine; alternate mark. N6-acetyllysine; alternate is present on residues Lys-263 and Lys-339. N6-succinyllysine; alternate is present on residues Lys-263 and Lys-339. Lys-351 carries the N6-acetyllysine modification. At Lys-367 the chain carries N6-acetyllysine; alternate. Lys-367 is modified (N6-succinyllysine; alternate). Arg-399 lines the substrate pocket. Residue Lys-422 is modified to N6-acetyllysine.

This sequence belongs to the class-I pyridoxal-phosphate-dependent aminotransferase family. In terms of assembly, homodimer. Requires pyridoxal 5'-phosphate as cofactor. As to expression, expressed mainly in kidney and to a lesser amount in liver and brain.

It is found in the mitochondrion. The enzyme catalyses L-kynurenine + 2-oxoglutarate = kynurenate + L-glutamate + H2O. It catalyses the reaction L-2-aminoadipate + 2-oxoglutarate = 2-oxoadipate + L-glutamate. The catalysed reaction is glycine + 2-oxoglutarate = glyoxylate + L-glutamate. It carries out the reaction L-kynurenine + glyoxylate = kynurenate + glycine + H2O. The enzyme catalyses 3-hydroxy-L-kynurenine + glyoxylate = xanthurenate + glycine + H2O. It catalyses the reaction 2-oxohexanoate + L-kynurenine = L-2-aminohexanoate + kynurenate + H2O. The catalysed reaction is 3-phenylpyruvate + L-kynurenine = kynurenate + L-phenylalanine + H2O. It carries out the reaction 4-methylsulfanyl-2-oxobutanoate + L-kynurenine = kynurenate + L-methionine + H2O. The enzyme catalyses 2-oxo-3-sulfanylpropanoate + L-kynurenine = kynurenate + L-cysteine + H2O. It catalyses the reaction indole-3-pyruvate + L-kynurenine = kynurenate + L-tryptophan + H2O. The catalysed reaction is 2-oxopentanoate + L-kynurenine = L-2-aminopentanoate + kynurenate + H2O. It carries out the reaction 4-methyl-2-oxopentanoate + L-kynurenine = kynurenate + L-leucine + H2O. The enzyme catalyses glyoxylate + L-methionine = 4-methylsulfanyl-2-oxobutanoate + glycine. It catalyses the reaction L-2-aminoadipate + glyoxylate = 2-oxoadipate + glycine. The catalysed reaction is L-tyrosine + glyoxylate = 3-(4-hydroxyphenyl)pyruvate + glycine. It carries out the reaction glyoxylate + L-phenylalanine = 3-phenylpyruvate + glycine. The enzyme catalyses L-tryptophan + glyoxylate = indole-3-pyruvate + glycine. It catalyses the reaction L-leucine + glyoxylate = 4-methyl-2-oxopentanoate + glycine. The catalysed reaction is 2-oxobutanoate + L-kynurenine = (2S)-2-aminobutanoate + kynurenate + H2O. It carries out the reaction 2-oxoadipate + L-kynurenine = L-2-aminoadipate + kynurenate + H2O. It participates in amino-acid degradation; L-lysine degradation via saccharopine pathway; glutaryl-CoA from L-lysine: step 4/6. In terms of biological role, transaminase with broad substrate specificity. Has transaminase activity towards aminoadipate, kynurenine, methionine and glutamate. Shows activity also towards tryptophan, aspartate and hydroxykynurenine. Accepts a variety of oxo-acids as amino-group acceptors, with a preference for 2-oxoglutarate, 2-oxocaproic acid, phenylpyruvate and alpha-oxo-gamma-methiol butyric acid. Can also use glyoxylate as amino-group acceptor (in vitro). The chain is Kynurenine/alpha-aminoadipate aminotransferase, mitochondrial from Mus musculus (Mouse).